A 458-amino-acid polypeptide reads, in one-letter code: MSQNPPLLRPDLARARVPDDARPGQPRIGMVSLGCPKALVDSERILTRLRAEGYAISPDYTGAEAVIVNTCGFLDSAKLESLEAIGEALEANGKVIVTGCLGAEPEYITGAHPTVLAVTGPQQYEQVLDAVHGAVPPAPDPFIDLLPPAGVKLTPRHYAYLKIAEGCDHKCKFCIIPDMRGKLVSRPQTAVMREAEKLVDSGVKELLIISQDTSAYGVDWKDRNKAGDEKFPILNLSRDLSTLGAWVRLHYVYPYPHVRELIPLMADPANGLLPYLDIPFQHAHPDVLKRMARPAAASRTLDEIAAWRRDCPNITLRSTFIVGYPGETEAEFQTLLDWLDEAQLDRIGCFQYENVDGARSNALPDHVAPEVKQDRWDRFMEKAQAISEAKLQAKVGRTMQVLVDSVDEEGATCRTVADAPEIDGNLFIDEGFDGLTPGDLVTVEVDEASEYDLWGKLT.

The 111-residue stretch at 26 to 136 folds into the MTTase N-terminal domain; that stretch reads PRIGMVSLGC…VLDAVHGAVP (111 aa). The [4Fe-4S] cluster site is built by Cys-35, Cys-71, Cys-100, Cys-167, Cys-171, and Cys-174. The region spanning 153 to 389 is the Radical SAM core domain; it reads LTPRHYAYLK…MEKAQAISEA (237 aa). The region spanning 392–458 is the TRAM domain; it reads QAKVGRTMQV…SEYDLWGKLT (67 aa).

It belongs to the methylthiotransferase family. RimO subfamily. [4Fe-4S] cluster is required as a cofactor.

It localises to the cytoplasm. The catalysed reaction is L-aspartate(89)-[ribosomal protein uS12]-hydrogen + (sulfur carrier)-SH + AH2 + 2 S-adenosyl-L-methionine = 3-methylsulfanyl-L-aspartate(89)-[ribosomal protein uS12]-hydrogen + (sulfur carrier)-H + 5'-deoxyadenosine + L-methionine + A + S-adenosyl-L-homocysteine + 2 H(+). In terms of biological role, catalyzes the methylthiolation of an aspartic acid residue of ribosomal protein uS12. This chain is Ribosomal protein uS12 methylthiotransferase RimO, found in Jannaschia sp. (strain CCS1).